A 261-amino-acid polypeptide reads, in one-letter code: U1 small nuclear ribonucleoprotein 70 kDa homolog (261 aa).

An RRM domain is found at 100-178; that stretch reads KTMFLSRLSY…RRIVVDVERG (79 aa). Residues 192–261 are disordered; the sequence is GLGGRHYTKE…DSSPKRRRYN (70 aa). Residues 198-215 show a composition bias toward basic and acidic residues; that stretch reads YTKERPRRERGSRFRGDS. Gly residues predominate over residues 216–235; it reads GFRGGYRGGFRKSSGGGSRF.

Component of the spliceosome, where it is associated with snRNP U1. Associates with U1 snRNA.

It localises to the nucleus. Involved in nuclear mRNA splicing. Essential for growth. The sequence is that of U1 small nuclear ribonucleoprotein 70 kDa homolog from Schizosaccharomyces pombe (strain 972 / ATCC 24843) (Fission yeast).